A 92-amino-acid chain; its full sequence is UPF0728 protein C10orf53 homolog (92 aa).

It belongs to the UPF0728 family.

The sequence is that of UPF0728 protein C10orf53 homolog from Danio rerio (Zebrafish).